Here is a 129-residue protein sequence, read N- to C-terminus: Small ribosomal subunit protein uS11 (129 aa).

This sequence belongs to the universal ribosomal protein uS11 family. As to quaternary structure, part of the 30S ribosomal subunit. Interacts with proteins S7 and S18. Binds to IF-3.

Located on the platform of the 30S subunit, it bridges several disparate RNA helices of the 16S rRNA. Forms part of the Shine-Dalgarno cleft in the 70S ribosome. This Francisella tularensis subsp. mediasiatica (strain FSC147) protein is Small ribosomal subunit protein uS11.